A 237-amino-acid chain; its full sequence is Golgi to ER traffic protein 1 (237 aa).

Topologically, residues 1 to 4 (MDSG) are lumenal. Residues 5-24 (GWIVYCCIFFILLGKVLEYT) form a helical membrane-spanning segment. Residues 25-110 (SSYQDKWFTK…SSKKVFGRVK (86 aa)) lie on the Cytoplasmic side of the membrane. A coiled-coil region spans residues 40–99 (EARKLNSQYHELLSERLRLQEENHSISAQDNYARWTKNNRKLGELDKKLGTIRDKLQETN). Residues 111-131 (LIGLTIPFWILKIWQRSHVVY) form a helical membrane-spanning segment. Topologically, residues 132–176 (HFPKQDLFPKLVTGVWARGWLYLALGPLQYLRNGSLNIQDYAPHG) are lumenal. A helical transmembrane segment spans residues 177 to 193 (VSLGIWIWALQATINTL). At 194–237 (EFLVKQVILEKPVSPPPQKSKSATKAETKRPEKLEITDDKVELD) the chain is on the cytoplasmic side. The tract at residues 205 to 237 (PVSPPPQKSKSATKAETKRPEKLEITDDKVELD) is disordered. Over residues 217-237 (TKAETKRPEKLEITDDKVELD) the composition is skewed to basic and acidic residues.

It belongs to the WRB/GET1 family. In terms of assembly, component of the Golgi to ER traffic (GET) complex, which is composed of GET1, GET2 and GET3. Within the complex, GET1 and GET2 form a heterotetramer which is stabilized by phosphatidylinositol binding and which binds to the GET3 homodimer.

Its subcellular location is the endoplasmic reticulum membrane. It localises to the golgi apparatus membrane. Functionally, required for the post-translational delivery of tail-anchored (TA) proteins to the endoplasmic reticulum. Together with GET2, acts as a membrane receptor for soluble GET3, which recognizes and selectively binds the transmembrane domain of TA proteins in the cytosol. The GET complex cooperates with the HDEL receptor ERD2 to mediate the ATP-dependent retrieval of resident ER proteins that contain a C-terminal H-D-E-L retention signal from the Golgi to the ER. This is Golgi to ER traffic protein 1 from Zygosaccharomyces rouxii (strain ATCC 2623 / CBS 732 / NBRC 1130 / NCYC 568 / NRRL Y-229).